The chain runs to 288 residues: 5,10-methylenetetrahydrofolate reductase (288 aa).

Residues A51, H73, G106, D107, A118, Y140, H144, and K159 each coordinate FAD. Residue D107 participates in (6S)-5-methyl-5,6,7,8-tetrahydrofolate binding. (6S)-5-methyl-5,6,7,8-tetrahydrofolate is bound at residue Q175. Q175 contributes to the NADH binding site.

It belongs to the methylenetetrahydrofolate reductase family. The cofactor is FAD.

The catalysed reaction is (6S)-5-methyl-5,6,7,8-tetrahydrofolate + NAD(+) = (6R)-5,10-methylene-5,6,7,8-tetrahydrofolate + NADH + H(+). It functions in the pathway one-carbon metabolism; tetrahydrofolate interconversion. The protein operates within amino-acid biosynthesis; L-methionine biosynthesis via de novo pathway. Its function is as follows. Catalyzes the NADH-dependent reduction of 5,10-methylenetetrahydrofolate to 5-methyltetrahydrofolate. Is required to provide the methyl group necessary for methionine synthetase to convert homocysteine to methionine; the methyl group is given by 5-methyltetrahydrofolate. Is required for Sphingobium SYK-6 to grow on vanillate or syringate as the sole source of carbon. In Sphingobium sp. (strain NBRC 103272 / SYK-6), this protein is 5,10-methylenetetrahydrofolate reductase.